A 960-amino-acid polypeptide reads, in one-letter code: UPF0182 protein DSY1630 (960 aa).

7 consecutive transmembrane segments (helical) span residues 7 to 27 (IMLV…GLFE), 50 to 70 (IIQI…LFSI), 105 to 125 (TLWL…VTGF), 169 to 189 (FGPL…AGVI), 212 to 232 (LALL…FDTF), 256 to 276 (ALKA…LAFF), and 285 to 305 (LPIL…PMVL). Disordered regions lie at residues 866 to 899 (SALA…QEDT) and 924 to 960 (TGDS…KTNP). Residues 881 to 897 (ETEETTEETEEPVDPQE) show a composition bias toward acidic residues. Over residues 931–944 (EGGKKADEDAHDVQ) the composition is skewed to basic and acidic residues. Positions 950-960 (SVSSEQSKTNP) are enriched in polar residues.

It belongs to the UPF0182 family.

Its subcellular location is the cell membrane. The polypeptide is UPF0182 protein DSY1630 (Desulfitobacterium hafniense (strain Y51)).